The primary structure comprises 163 residues: Staphylokinase (163 aa).

The signal sequence occupies residues 1–27 (MLKRSLLFLTVLLLLFSFSSITNEVSA).

Belongs to the staphylokinase family.

The protein localises to the secreted. In terms of biological role, potent plasminogen activator that converts plasminogen into plasmin. It forms a 1:1 complex with plasmin, which in turn activates other plasminogen molecules. This chain is Staphylokinase (sak), found in Staphylococcus aureus (strain MW2).